A 612-amino-acid polypeptide reads, in one-letter code: C4-dicarboxylate transport sensor protein DctB (612 aa).

A run of 2 helical transmembrane segments spans residues 23 to 43 (SLVI…YFAE) and 292 to 312 (VLLI…LLTL). Positions 328-376 (KRQLEERVLERTRELENANAQLQQEVHEREQAQRELMRAQDEVVQAGKL) form a coiled coil. In terms of domain architecture, Histidine kinase spans 385-599 (SISHELNQPL…VVRLHLLPGV (215 aa)). Position 388 is a phosphohistidine; by autocatalysis (histidine 388).

Post-translationally, autophosphorylated.

It is found in the cell inner membrane. The enzyme catalyses ATP + protein L-histidine = ADP + protein N-phospho-L-histidine.. Member of the two-component regulatory system DctB/DctD, which regulates C4-dicarboxylate transport via regulation of expression of the dctPQM operon and dctA. DctB functions as a membrane-associated protein kinase that phosphorylates DctD in response to environmental signals. The chain is C4-dicarboxylate transport sensor protein DctB from Pseudomonas aeruginosa (strain ATCC 15692 / DSM 22644 / CIP 104116 / JCM 14847 / LMG 12228 / 1C / PRS 101 / PAO1).